Here is a 437-residue protein sequence, read N- to C-terminus: Phosphoethanolamine N-methyltransferase 2 (437 aa).

Residues 186 to 187 (QY) and Tyr-195 contribute to the N-methylethanolamine phosphate site. S-adenosyl-L-homocysteine contacts are provided by residues 204–205 (IS), Gly-232, Asp-254, 281–282 (DA), and Arg-298. Residues Tyr-329, Tyr-343, 347–349 (RAY), and Lys-415 each bind N-methylethanolamine phosphate.

This sequence belongs to the class I-like SAM-binding methyltransferase superfamily.

The catalysed reaction is N-methylethanolamine phosphate + S-adenosyl-L-methionine = N,N-dimethylethanolamine phosphate + S-adenosyl-L-homocysteine + H(+). It catalyses the reaction N,N-dimethylethanolamine phosphate + S-adenosyl-L-methionine = phosphocholine + S-adenosyl-L-homocysteine + H(+). The protein operates within phospholipid metabolism; phosphatidylcholine biosynthesis; phosphocholine from phosphoethanolamine. Its activity is regulated as follows. Feedback inhibition by phosphatidylcholine and also by S-adenosylhomocysteine. Its function is as follows. Catalyzes the last two methylation reactions in the synthesis of phosphocholine, by converting phospho-monomethylethanolamine (N-methylethanolamine phosphate) into phospho-dimethylethanolamine (N,N-dimethylethanolamine phosphate) and the latter into phosphocholine. Phosphocholine is a precursor for phosphatidylcholine, a major component in membranes and a precursor itself in the production of glycoconjugates secreted by parasitic nematodes to avoid host immune responses. This Caenorhabditis elegans protein is Phosphoethanolamine N-methyltransferase 2.